A 462-amino-acid polypeptide reads, in one-letter code: Cysteine proteinase RD21A (462 aa).

The signal sequence occupies residues 1-21 (MGFLKPTMAILFLAMVAVSSA). Positions 22–136 (VDMSIISYDE…LRYEARVGDE (115 aa)) are cleaved as a propeptide — activation peptide. N-linked (GlcNAc...) asparagine glycosylation occurs at asparagine 90. Cystine bridges form between cysteine 158/cysteine 200, cysteine 192/cysteine 233, cysteine 291/cysteine 342, cysteine 375/cysteine 387, and cysteine 381/cysteine 402. Cysteine 161 is an active-site residue. Active-site residues include histidine 297 and asparagine 317. Residues 353–462 (KNGENPPNPG…FWSQGRKNIA (110 aa)) constitute a propeptide, removed in mature form. Asparagine 414 is a glycosylation site (N-linked (GlcNAc...) asparagine).

It belongs to the peptidase C1 family. In terms of assembly, interacts with SERPIN1. Interacts with PRN2. Interacts with WSCP. Interacts with TZF4, TZF5 and TZF6.

Its subcellular location is the vacuole. It localises to the golgi apparatus. The protein localises to the cytoplasm. The protein resides in the stress granule. It is found in the P-body. Its activity is regulated as follows. Inhibited by the cysteine protease inhibitor E64 (L-trans-epoxysuccinyl-leucylamide-(4-guanido)-butane). In terms of biological role, cysteine protease that plays a role in immunity, senescence, and biotic and abiotic stresses. Involved in immunity against the necrotrophic fungal pathogen Botrytis cinerea. Involved in elicitor-stimulated programmed cell death (PCD). During infection by the necrotrophic fungal pathogen Botrytis cinerea, functions as a PCD-promoting protease that is released from the ER body or vacuole to the cytoplasm. Accumulates in endoplasmic reticulum-derived bodies in epidermal cells and may participate in cell death in stressed or injured cells. Involved in water stress-induced cell death through its protease activity that is released to the cytoplasm after vacuolar collapse. Possesses protease activity in vitro and is involved in cell death in the transmitting tract and septum epidermis during flower development. Possesses peptide ligase activity. Can ligate peptides to unmodified N-termini of acceptor proteins. Probably ligates through a thioester intermediate. The chain is Cysteine proteinase RD21A from Arabidopsis thaliana (Mouse-ear cress).